The following is an 861-amino-acid chain: Nuclear pore complex protein NUP93A (861 aa).

This sequence belongs to the nucleoporin interacting component (NIC) family. Part of the nuclear pore complex (NPC). The NPC has an eight-fold symmetrical structure comprising a central transport channel and two rings, the cytoplasmic and nuclear rings, to which eight filaments are attached. The cytoplasmic filaments have loose ends, while the nuclear filaments are joined in a distal ring, forming a nuclear basket. NPCs are highly dynamic in configuration and composition, and can be devided in 3 subcomplexes, the NUP62 subcomplex, the NUP107-160 subcomplex and the NUP93 subcomplex, containing approximately 30 different nucleoporin proteins.

Its subcellular location is the nucleus envelope. The protein localises to the nucleus. It localises to the nuclear pore complex. The polypeptide is Nuclear pore complex protein NUP93A (Arabidopsis thaliana (Mouse-ear cress)).